The sequence spans 130 residues: Small ribosomal subunit protein uS8 (130 aa).

This sequence belongs to the universal ribosomal protein uS8 family. In terms of assembly, part of the 30S ribosomal subunit. Contacts proteins S5 and S12.

In terms of biological role, one of the primary rRNA binding proteins, it binds directly to 16S rRNA central domain where it helps coordinate assembly of the platform of the 30S subunit. This is Small ribosomal subunit protein uS8 from Opitutus terrae (strain DSM 11246 / JCM 15787 / PB90-1).